We begin with the raw amino-acid sequence, 817 residues long: MASNGYSNSADAVPPPPSDNDGRPPSPPPPPPDSFVPPPPPSSLAPPPPPSSDLPPPPPSELLPPPPEPKKKKGWGAPKPGPLSIEDILKKKKEADEAAAKPKFLSKAAREKLALEKRAKEVEEQKRKREAEQDNRISIGSVNGNGNGYGSAANGRDGYERSYQQENGRRESSFVPTGPRAMRNSQQSRSSSDKPNDMEPPPKPAKSAAAGTGKASVAGEKRPANAEDLQAALIKTRYMGAETNQSTFSAKKKRRRTTEKKFNFEWNAEEDTSPDYNPIYQNRAEAGLYGRGRLGGFAEDEGATLKYAKALEERDAEAGGARAREIVEMERRRKEDAGRNSLDKHWSEKKLEHMRERDWRIFKEDFNISTKGGAIPNPMRNWSESKLPKRLLDVIHQVGYDEPSAVQRAAIPIALQARDLIGVAVTGSGKTAAFLLPLLVYISELPPLNEFTKNDGPYAIILAPTRELAQQIEVEAKKFATPLGFTCVSIVGGHSLEEQSYNLRNGAEIIIATPGRLVDCIERRVLVLGQCCYIIMDEADRMIDLGFEESVNKILDALPVSNEKPDTDDAEDAQAMSRHLGGKDRYRQTMMYTATMPPAVEKIAKKYLRRPAIVTIGNIGEAVETVEQRVEFVAGEDKRKKRLNEILASGEFAPPIIVFVNIKRNCDAVARDIKHMGFTSVTLHGSKTQEQREAALASVRSGATNVLVATDLAGRGIDVPDVSLVVNFNMATNIESYTHRIGRTGRAGKSGVAITFLGNEDSDTMYDLKQMLTKSSISRVPEELRKHEAAQQKSQRGQGMKKIEEGGFGGKGGGGGW.

Positions methionine 1–alanine 10 are enriched in polar residues. Disordered stretches follow at residues methionine 1–glutamate 86 and arginine 118–asparagine 225. Over residues valine 13–proline 67 the composition is skewed to pro residues. Over residues arginine 118–asparagine 135 the composition is skewed to basic and acidic residues. Residues alanine 205–alanine 218 are compositionally biased toward low complexity. The Q motif motif lies at arginine 380–arginine 408. A Helicase ATP-binding domain is found at isoleucine 411–valine 614. An ATP-binding site is contributed by alanine 424–threonine 431. The DEAD box signature appears at aspartate 537–aspartate 540. Positions threonine 625–glutamate 788 constitute a Helicase C-terminal domain. The disordered stretch occupies residues serine 778–tryptophan 817. Residues valine 780–alanine 790 show a composition bias toward basic and acidic residues. Over residues glycine 806–tryptophan 817 the composition is skewed to gly residues.

The protein belongs to the DEAD box helicase family. DDX23/PRP28 subfamily. In terms of assembly, component of the U5 snRNP complex.

The protein localises to the cytoplasm. The protein resides in the nucleus. It catalyses the reaction ATP + H2O = ADP + phosphate + H(+). In terms of biological role, ATP-dependent RNA helicase involved in mRNA splicing. May destabilize the U1/5' splice site duplex to permit an effective competition for the 5' splice site by the U6 snRNA, resulting in the switch between U1 and U6 at the 5' splice site. May also act to unwind the U4/U6 base-pairing interaction in the U4/U6/U5 snRNP, facilitating the first covalent step of splicing. This chain is Pre-mRNA-splicing ATP-dependent RNA helicase prp28 (prp28), found in Botryotinia fuckeliana (strain B05.10) (Noble rot fungus).